Reading from the N-terminus, the 835-residue chain is Ion-translocating oxidoreductase complex subunit C (835 aa).

2 4Fe-4S ferredoxin-type domains span residues 368 to 397 and 407 to 436; these read YAPP…QQLY and KSEE…IQYF. Residues C377, C380, C383, C387, C416, C419, C422, and C426 each coordinate [4Fe-4S] cluster. Basic and acidic residues predominate over residues 468 to 489; it reads AREEQERKARAQKAMEARRQEM. Disordered regions lie at residues 468–492, 540–574, 586–618, 634–666, 682–714, 730–762, and 778–811; these read AREE…MKTA, QRKA…SKSA, KAAQ…AEDP, KAAQ…ADDP, and KAAQ…EDPR. Residues 552–561 show a composition bias toward polar residues; it reads TQNTDVSQVE. Positions 648-657 are enriched in polar residues; that stretch reads SSSNTLSVGN. Polar residues-rich tracts occupy residues 745 to 756 and 793 to 804; these read SSDTLSVGNETE.

This sequence belongs to the 4Fe4S bacterial-type ferredoxin family. RnfC subfamily. The complex is composed of six subunits: RnfA, RnfB, RnfC, RnfD, RnfE and RnfG. [4Fe-4S] cluster is required as a cofactor.

Its subcellular location is the cell inner membrane. Part of a membrane-bound complex that couples electron transfer with translocation of ions across the membrane. This chain is Ion-translocating oxidoreductase complex subunit C, found in Pasteurella multocida (strain Pm70).